A 355-amino-acid chain; its full sequence is Protein ATP1B4 (355 aa).

Residues Met-1–Ser-108 lie on the Nuclear side of the membrane. Residues Glu-35–Thr-76 are disordered. The segment covering Asp-49 to Glu-68 has biased composition (acidic residues). Residues Leu-109–Met-129 form a helical; Signal-anchor for type II membrane protein membrane-spanning segment. Over Tyr-130–Thr-355 the chain is Perinuclear space.

The protein belongs to the X(+)/potassium ATPases subunit beta family. Associates with a SMAD7-transcriptional complex. Interacts with SNW1 and TOR1AIP1. Does not associate with known Na,K-ATPase alpha-subunits. As to expression, expressed in skeletal muscle (at protein level). Expressed during postnatal development in skeletal muscle and heart.

It is found in the nucleus inner membrane. In terms of biological role, may act as a transcriptional coregulator during muscle development through its interaction with SNW1. Has lost its ancestral function as a Na,K-ATPase beta-subunit. This is Protein ATP1B4 (ATP1B4) from Sus scrofa (Pig).